Consider the following 479-residue polypeptide: Protein nucleotidyltransferase YdiU (479 aa).

The ATP site is built by Gly83, Gly85, Arg86, Lys106, Asp118, Gly119, Arg169, and Arg176. Asp245 acts as the Proton acceptor in catalysis. Mg(2+)-binding residues include Asn246 and Asp255. Asp255 is an ATP binding site.

Belongs to the SELO family. Requires Mg(2+) as cofactor. It depends on Mn(2+) as a cofactor.

The enzyme catalyses L-seryl-[protein] + ATP = 3-O-(5'-adenylyl)-L-seryl-[protein] + diphosphate. It carries out the reaction L-threonyl-[protein] + ATP = 3-O-(5'-adenylyl)-L-threonyl-[protein] + diphosphate. The catalysed reaction is L-tyrosyl-[protein] + ATP = O-(5'-adenylyl)-L-tyrosyl-[protein] + diphosphate. It catalyses the reaction L-histidyl-[protein] + UTP = N(tele)-(5'-uridylyl)-L-histidyl-[protein] + diphosphate. The enzyme catalyses L-seryl-[protein] + UTP = O-(5'-uridylyl)-L-seryl-[protein] + diphosphate. It carries out the reaction L-tyrosyl-[protein] + UTP = O-(5'-uridylyl)-L-tyrosyl-[protein] + diphosphate. Nucleotidyltransferase involved in the post-translational modification of proteins. It can catalyze the addition of adenosine monophosphate (AMP) or uridine monophosphate (UMP) to a protein, resulting in modifications known as AMPylation and UMPylation. The chain is Protein nucleotidyltransferase YdiU from Erwinia tasmaniensis (strain DSM 17950 / CFBP 7177 / CIP 109463 / NCPPB 4357 / Et1/99).